Here is a 336-residue protein sequence, read N- to C-terminus: MLYRLARTGFFQLDAEKAHDLAIQNFKRFTGTPIDLLYRQQLPNRPVECMGLTFKNPVGLAAGLDKNGECIDAFGAMGFGFVEVGTVTPRPQAGNDKPRLFRLVEAEGIINRMGFNNLGVDNLIENVKKSNYDGILGINIGKNKDTPIEKGAEDYLICMEKVYQYAGYIAVNISSPNTPGLRSLQYGEALDDLLSELKTKQSELEEKHGKYVPLALKIAPDLSDDEISQICESLIKNKIDGVIATNTTLDRSIVEGMKHCDEAGGLSGRPVQSRSTEVVRKLHEELGDALPIIGVGGVDSYVAAKEKMMAGAKLVQVYSGFIYKGPGLVGDIVKNL.

Residues 62–66 (AGLDK) and Thr-86 contribute to the FMN site. Lys-66 is a substrate binding site. 111 to 115 (NRMGF) lines the substrate pocket. The FMN site is built by Asn-139 and Asn-172. Asn-172 serves as a coordination point for substrate. Ser-175 serves as the catalytic Nucleophile. Asn-177 serves as a coordination point for substrate. FMN is bound by residues Lys-217 and Thr-245. 246–247 (NT) contributes to the substrate binding site. FMN is bound by residues Gly-268, Gly-297, and 318-319 (YS).

It belongs to the dihydroorotate dehydrogenase family. Type 2 subfamily. In terms of assembly, monomer. It depends on FMN as a cofactor.

It localises to the cell membrane. It catalyses the reaction (S)-dihydroorotate + a quinone = orotate + a quinol. Its pathway is pyrimidine metabolism; UMP biosynthesis via de novo pathway; orotate from (S)-dihydroorotate (quinone route): step 1/1. Functionally, catalyzes the conversion of dihydroorotate to orotate with quinone as electron acceptor. The sequence is that of Dihydroorotate dehydrogenase (quinone) from Vibrio atlanticus (strain LGP32) (Vibrio splendidus (strain Mel32)).